The primary structure comprises 378 residues: 3-dehydroquinate synthase (378 aa).

Residues 115–119, 139–140, K152, and K161 contribute to the NAD(+) site; these read GVVGD and TS. E194, H256, and H275 together coordinate Zn(2+).

Belongs to the sugar phosphate cyclases superfamily. Dehydroquinate synthase family. Requires Co(2+) as cofactor. It depends on Zn(2+) as a cofactor. NAD(+) serves as cofactor.

It localises to the cytoplasm. The catalysed reaction is 7-phospho-2-dehydro-3-deoxy-D-arabino-heptonate = 3-dehydroquinate + phosphate. The protein operates within metabolic intermediate biosynthesis; chorismate biosynthesis; chorismate from D-erythrose 4-phosphate and phosphoenolpyruvate: step 2/7. Its function is as follows. Catalyzes the conversion of 3-deoxy-D-arabino-heptulosonate 7-phosphate (DAHP) to dehydroquinate (DHQ). This is 3-dehydroquinate synthase from Brucella anthropi (strain ATCC 49188 / DSM 6882 / CCUG 24695 / JCM 21032 / LMG 3331 / NBRC 15819 / NCTC 12168 / Alc 37) (Ochrobactrum anthropi).